The chain runs to 383 residues: Sulfate adenylyltransferase (383 aa).

This sequence belongs to the sulfate adenylyltransferase family.

It carries out the reaction sulfate + ATP + H(+) = adenosine 5'-phosphosulfate + diphosphate. Its pathway is sulfur metabolism; hydrogen sulfide biosynthesis; sulfite from sulfate: step 1/3. The sequence is that of Sulfate adenylyltransferase (sat) from Aeropyrum pernix (strain ATCC 700893 / DSM 11879 / JCM 9820 / NBRC 100138 / K1).